Consider the following 946-residue polypeptide: Probable leucine-rich repeat receptor-like protein kinase At5g49770 (946 aa).

A signal peptide spans 1–25 (MKMSSRIGLFKLLILLFFQIYSVYA). Residues 26–561 (FTDGSDFTAL…LEDSKTVSMK (536 aa)) are Extracellular-facing. LRR repeat units follow at residues 67-91 (DNRV…ISTL), 92-116 (SELQ…IGNL), 118-140 (KLTF…IGNL), 141-164 (EQLT…MGRL), 166-191 (KLYW…SLPG), 195-219 (LLQT…LFSS), 221-244 (MTLL…LGLV), 245-268 (QNLT…LNNL), 269-293 (TNLQ…SLTS), 295-314 (YTLD…SWIP), 316-340 (LNSL…LFSP), 342-365 (QLQT…NYSK), 367-387 (LDFV…ANNP), and 389-407 (NVML…QLSG). N-linked (GlcNAc...) asparagine glycans are attached at residues Asn-246, Asn-267, and Asn-287. 2 N-linked (GlcNAc...) asparagine glycosylation sites follow: Asn-354 and Asn-362. 4 N-linked (GlcNAc...) asparagine glycosylation sites follow: Asn-415, Asn-460, Asn-489, and Asn-514. A helical membrane pass occupies residues 562 to 582 (VIIGVVVGVVVLLLLLALAGI). At 583–946 (YALRQKKRAQ…YTGVFPTPKP (364 aa)) the chain is on the cytoplasmic side. Residues 634 to 908 (FSDANDVGGG…EVVQELESIL (275 aa)) enclose the Protein kinase domain. Residues 640 to 648 (VGGGGYGQV) and Lys-662 contribute to the ATP site. Asp-758 functions as the Proton acceptor in the catalytic mechanism. Residues 919-946 (SATYEEASGDPYGRDSFEYTGVFPTPKP) form a disordered region.

Belongs to the protein kinase superfamily. Ser/Thr protein kinase family.

The protein localises to the membrane. It carries out the reaction L-seryl-[protein] + ATP = O-phospho-L-seryl-[protein] + ADP + H(+). The enzyme catalyses L-threonyl-[protein] + ATP = O-phospho-L-threonyl-[protein] + ADP + H(+). In Arabidopsis thaliana (Mouse-ear cress), this protein is Probable leucine-rich repeat receptor-like protein kinase At5g49770.